We begin with the raw amino-acid sequence, 159 residues long: FCS-Like Zinc finger 2 (159 aa).

The FLZ-type zinc-finger motif lies at 75 to 119; the sequence is HFLDSCFLCKKRLGDNRDIFMYRGDTPFCSEECREEQIERDEAKE. A compositionally biased stretch (basic and acidic residues) spans 113–122; it reads ERDEAKEKKQ. A disordered region spans residues 113 to 159; sequence ERDEAKEKKQSLSTSVKAMRRNEKRSSSSSPTRSRNYAFRTGTVAAA.

Belongs to the FLZ family. In terms of assembly, interacts with KIN10 and KIN11 via its FLZ-type zinc finger domain. Interacts with KINB1, KINB2, KINB3 and SNF4 via its N-terminal part. Forms heterodimer with FLZ7, FLZ10, FLZ11, FLZ12, FLZ15, FLZ17 and FLZ18 in vitro.

Functionally, may act as an adapter to facilitate the interaction of SnRK1 complex with effector proteins, conferring tissue- and stimulus-type specific differences in the SnRK1 regulation pathway. The sequence is that of FCS-Like Zinc finger 2 from Arabidopsis thaliana (Mouse-ear cress).